The primary structure comprises 851 residues: DNA mismatch repair protein MutS (851 aa).

602–609 (GPNMSGKS) provides a ligand contact to ATP.

This sequence belongs to the DNA mismatch repair MutS family.

In terms of biological role, this protein is involved in the repair of mismatches in DNA. It is possible that it carries out the mismatch recognition step. This protein has a weak ATPase activity. This Streptococcus equi subsp. equi (strain 4047) protein is DNA mismatch repair protein MutS.